The primary structure comprises 545 residues: E3 ubiquitin-protein ligase ipaH9.8 (545 aa).

The tract at residues 1-242 (MLPINNNFSL…YHGPRIYFSM (242 aa)) is interaction with target proteins. LRR repeat units follow at residues 57–77 (NSDELRLDRLNLSSLPDNLPA), 78–99 (QITLLNVSYNQLTNLPELPVTL), 100–117 (KKLYSASNKLSELPVLPP), 118–139 (ALESLQVQHNELENLPALPDSL), 140–157 (LTMNISYNEIVSLPSLPL), 158–179 (ALKNLRATRNFLTELPAFSEGN), 182–203 (VVREYFFDRNQISHIPESILNL), and 205–228 (NECSIHISDNPLSSHALQALQRLT). Residues 243-250 (SDGQQNTL) form a linker region. The interval 251-545 (HRPLADAVTA…SENGSQLHHS (295 aa)) is E3 ubiquitin-protein ligase catalytic domain. The NEL domain maps to 253–545 (PLADAVTAWF…SENGSQLHHS (293 aa)). Cys-337 functions as the Glycyl thioester intermediate in the catalytic mechanism.

Belongs to the LRR-containing bacterial E3 ligase family. In terms of assembly, also interacts with human and mouse U2AF1 (U2AF35). Ubiquitinated in the presence of host E1 ubiquitin-activating enzyme, E2 ubiquitin-conjugating enzyme and ubiquitin.

It localises to the secreted. The protein localises to the host cytoplasm. It is found in the host nucleus. It carries out the reaction S-ubiquitinyl-[E2 ubiquitin-conjugating enzyme]-L-cysteine + [acceptor protein]-L-lysine = [E2 ubiquitin-conjugating enzyme]-L-cysteine + N(6)-ubiquitinyl-[acceptor protein]-L-lysine.. Its activity is regulated as follows. Exists in an autoinhibited state in the absence of substrate protein, due to interactions of the leucine-rich repeats with NEL domain. Is activated upon binding to a substrate protein. Functionally, effector E3 ubiquitin ligase that interferes with host's ubiquitination pathway and modulates the acute inflammatory responses, thus facilitating bacterial colonization within the host cell. Interacts with IKBKG (NEMO) and TNIP1 (ABIN-1), a ubiquitin-binding adapter protein, which results in TNIP1-dependent 'Lys-27'-linked polyubiquitination of IKBKG. Consequently, polyubiquitinated IKBKG undergoes proteasome-dependent degradation, which perturbs NF-kappa-B activation during bacterial infection. Mediates polyubiquitination of host U2AF1, leading to its proteasomal degradation. Catalyzes 'Lys-48'-linked polyubiquitination and subsequent degradation of a subset of host guanylate-binding proteins (GBP1, GBP2, GBP4 and GBP6), thereby suppressing host cell defense. In contrast, host GBP3 and GBP7 are not ubiquitinated by IpaH9.8. Uses UBE2D2 (UBCH5B) as an E2 ubiquitin-conjugating enzyme. This is E3 ubiquitin-protein ligase ipaH9.8 (ipaH9.8) from Shigella boydii serotype 4 (strain Sb227).